We begin with the raw amino-acid sequence, 366 residues long: UDP-N-acetylenolpyruvoylglucosamine reductase (366 aa).

In terms of domain architecture, FAD-binding PCMH-type spans 29-203; it reads VGPVARTLVT…LEVEFALDAS (175 aa). The active site involves arginine 177. Residue serine 258 is the Proton donor of the active site. Glutamate 358 is a catalytic residue.

Belongs to the MurB family. The cofactor is FAD.

It localises to the cytoplasm. It catalyses the reaction UDP-N-acetyl-alpha-D-muramate + NADP(+) = UDP-N-acetyl-3-O-(1-carboxyvinyl)-alpha-D-glucosamine + NADPH + H(+). Its pathway is cell wall biogenesis; peptidoglycan biosynthesis. In terms of biological role, cell wall formation. The polypeptide is UDP-N-acetylenolpyruvoylglucosamine reductase (Mycobacterium marinum (strain ATCC BAA-535 / M)).